The primary structure comprises 501 residues: NAD(P)H-quinone oxidoreductase chain 4, chloroplastic (501 aa).

A run of 14 helical transmembrane segments spans residues 4 to 24, 35 to 55, 84 to 104, 111 to 129, 134 to 154, 168 to 188, 209 to 229, 243 to 263, 273 to 293, 306 to 326, 331 to 351, 387 to 407, 417 to 437, and 463 to 483; these read FPWL…ILFL, YTIC…CYHF, GLSI…TLAA, SRLL…IGSF, LLLF…LLSM, FILY…GMDL, ALEI…SPII, HYST…YGLI, AHSI…IYAA, IAYS…SITD, GAIL…FLAG, LALP…GIIT, ILIT…SLSM, and LFVS…PDFV.

The protein belongs to the complex I subunit 4 family.

The protein resides in the plastid. It localises to the chloroplast thylakoid membrane. The catalysed reaction is a plastoquinone + NADH + (n+1) H(+)(in) = a plastoquinol + NAD(+) + n H(+)(out). It carries out the reaction a plastoquinone + NADPH + (n+1) H(+)(in) = a plastoquinol + NADP(+) + n H(+)(out). The sequence is that of NAD(P)H-quinone oxidoreductase chain 4, chloroplastic from Buxus microphylla (Littleleaf boxwood).